The primary structure comprises 186 residues: Peptidoglycan-recognition protein SD (186 aa).

Positions 1–18 are cleaved as a signal peptide; sequence MTWIGLLIVGLTAIAVQG. The 123-residue stretch at 47–169 folds into the N-acetylmuramoyl-L-alanine amidase domain; sequence AVIAHTAGGA…RQVSATMSPG (123 aa). Cys57 and Cys63 are joined by a disulfide. Residue Asn181 is glycosylated (N-linked (GlcNAc...) asparagine).

It belongs to the N-acetylmuramoyl-L-alanine amidase 2 family.

It is found in the secreted. Its function is as follows. Peptidoglycan-recognition protein that plays a key role in innate immunity by binding to peptidoglycans (PGN) of Gram-positive bacteria and activating the Toll pathway. Has no activity against on Gram-negative bacteria and fungi. Shows some partial redundancy with PRPGP-SA in Gram-positive bacteria recognition. May act by activating the proteolytic cleavage of Spatzle and the subsequent activation of Toll pathway. Recognizes S.aureus PGN. This chain is Peptidoglycan-recognition protein SD (PGRP-SD), found in Drosophila simulans (Fruit fly).